A 294-amino-acid chain; its full sequence is Putative ribose uptake protein RbsU (294 aa).

A run of 10 helical transmembrane segments spans residues 2-24 (NAVN…VIVG), 34-56 (ILGT…GTPI), 63-82 (IFCL…TFHV), 92-114 (MPIT…LGNW), 121-140 (LIGF…TAWS), 150-172 (GAVK…SAFP), 179-198 (GFQG…IIFG), 218-235 (IFSG…LISA), 242-264 (LATG…IYIL), and 274-293 (IAVM…TAFI).

It belongs to the GRP transporter (TC 2.A.7.5) family.

The protein resides in the cell membrane. Functionally, could be involved in the uptake of ribose. The chain is Putative ribose uptake protein RbsU (rbsU) from Latilactobacillus sakei subsp. sakei (strain 23K) (Lactobacillus sakei subsp. sakei).